Consider the following 323-residue polypeptide: Transcription factor MYB56 (323 aa).

Basic and acidic residues predominate over residues 1–14 (MNPNLLEKDLRGKE). Residues 1-84 (MNPNLLEKDL…EKSLRMRGKS (84 aa)) are disordered. The segment covering 27-60 (NFRSLPNSHTAACKTSLNNPSISRNHPHNKSASV) has biased composition (polar residues). Residues 66–78 (EHGNERGENEKSL) are compositionally biased toward basic and acidic residues. 2 HTH myb-type domains span residues 88-139 (TKVC…FNQL) and 140-194 (DPRI…ARRT). DNA-binding regions (H-T-H motif) lie at residues 116 to 138 (WNLISNHLLGRSGKSCRLRWFNQ) and 167 to 190 (WALISRLFPGRTDNAVKNHWHVIM). Residues 192–217 (RRTRESQRQRQQPPPTLSRDAEMTVS) form a disordered region.

Forms homodimer. Interacts with the dephosphorylated active form of BES1 in the nucleus of quiescent center (QC) cells. Interacts with BPM1, BPM2, BPM3, BPM4, BPM5 and BPM6 at the promoter of FLOWERING LOCUS T (FT). Mostly expressed in flowers (at protein level) and siliques, and, to a lower extent, in roots, stems and leaves. Expressed in embryos (e.g. heart and torpedo stages) and cotyledons, and, at low levels, in roots and inflorescence. Accumulates specifically in root apical meristem quiescent center (QC) and vascular initial cells.

Its subcellular location is the nucleus. It is found in the cytoplasm. It localises to the cytosol. Its function is as follows. Acts as a cell-specific local repressor of quiescent center (QC) self-renewal by cell divisions in the primary root. Counteracts brassinosteroid (BR)-mediated cell division in the QC cells. Regulates maternally seed size, especially before the heart stage, promoting both endothelial cells expansion and cell number in the outer integument layer of the seed coat. Modulates the expression of genes involved in cell wall metabolism such as cell division and expansion. Negative regulator of flowering via the repression of FT transcription. This chain is Transcription factor MYB56, found in Arabidopsis thaliana (Mouse-ear cress).